A 123-amino-acid chain; its full sequence is Large ribosomal subunit protein bL20 (123 aa).

The protein belongs to the bacterial ribosomal protein bL20 family.

Its function is as follows. Binds directly to 23S ribosomal RNA and is necessary for the in vitro assembly process of the 50S ribosomal subunit. It is not involved in the protein synthesizing functions of that subunit. The chain is Large ribosomal subunit protein bL20 from Chlamydia trachomatis serovar L2b (strain UCH-1/proctitis).